Consider the following 106-residue polypeptide: Ribonuclease P protein component 4 (106 aa).

Residues Cys-57, Cys-60, Cys-83, and Cys-86 each contribute to the Zn(2+) site.

It belongs to the eukaryotic/archaeal RNase P protein component 4 family. In terms of assembly, consists of a catalytic RNA component and at least 4-5 protein subunits. Zn(2+) is required as a cofactor.

The protein resides in the cytoplasm. It catalyses the reaction Endonucleolytic cleavage of RNA, removing 5'-extranucleotides from tRNA precursor.. In terms of biological role, part of ribonuclease P, a protein complex that generates mature tRNA molecules by cleaving their 5'-ends. This chain is Ribonuclease P protein component 4, found in Saccharolobus solfataricus (strain ATCC 35092 / DSM 1617 / JCM 11322 / P2) (Sulfolobus solfataricus).